Consider the following 437-residue polypeptide: Adenosylhomocysteinase (437 aa).

Substrate is bound by residues T54, D125, and E170. An NAD(+)-binding site is contributed by 171–173; it reads TTT. Substrate-binding residues include K200 and D204. Residues N205, 234–239, E258, N293, 314–316, and N361 contribute to the NAD(+) site; these read GYGWVG and AGH.

This sequence belongs to the adenosylhomocysteinase family. The cofactor is NAD(+).

It is found in the cytoplasm. The enzyme catalyses S-adenosyl-L-homocysteine + H2O = L-homocysteine + adenosine. It functions in the pathway amino-acid biosynthesis; L-homocysteine biosynthesis; L-homocysteine from S-adenosyl-L-homocysteine: step 1/1. Functionally, may play a key role in the regulation of the intracellular concentration of adenosylhomocysteine. The protein is Adenosylhomocysteinase of Pyrobaculum aerophilum (strain ATCC 51768 / DSM 7523 / JCM 9630 / CIP 104966 / NBRC 100827 / IM2).